A 242-amino-acid polypeptide reads, in one-letter code: MDPYTVAIIKKLGIEEQVETAATKSPFIEGLANGTAPPGAFKRWLYEDRIYVQGCSLCLAKAINAITHEKGFPKEALDLFLGAYNVITPELAHFEARCKESNVEMPKLKPVPTSWEQALQDNKPEEYYHLSAPDCKSYIQFMTQELFEIPGTSGIDYFMAFYLNEVIYHRAWKFVRESKQFQKNCPEEMEFVKWWGQPSFGKFVENLARSIQDVPFTSATVDIAKKICNFEYRFFSTAFEKA.

It is found in the cytoplasm. It localises to the nucleus. This is an uncharacterized protein from Schizosaccharomyces pombe (strain 972 / ATCC 24843) (Fission yeast).